Consider the following 397-residue polypeptide: Succinate--CoA ligase [ADP-forming] subunit beta (397 aa).

One can recognise an ATP-grasp domain in the interval 9 to 254; the sequence is KALLRSYGAP…ETEEDPKELA (246 aa). ATP-binding positions include Lys-46, 53–55, Glu-109, Ser-112, and Glu-117; that span reads GRG. Residues Asn-209 and Asp-223 each contribute to the Mg(2+) site. Substrate contacts are provided by residues Asn-274 and 331–333; that span reads GIM.

This sequence belongs to the succinate/malate CoA ligase beta subunit family. As to quaternary structure, heterotetramer of two alpha and two beta subunits. Mg(2+) serves as cofactor.

The catalysed reaction is succinate + ATP + CoA = succinyl-CoA + ADP + phosphate. It carries out the reaction GTP + succinate + CoA = succinyl-CoA + GDP + phosphate. The protein operates within carbohydrate metabolism; tricarboxylic acid cycle; succinate from succinyl-CoA (ligase route): step 1/1. Its function is as follows. Succinyl-CoA synthetase functions in the citric acid cycle (TCA), coupling the hydrolysis of succinyl-CoA to the synthesis of either ATP or GTP and thus represents the only step of substrate-level phosphorylation in the TCA. The beta subunit provides nucleotide specificity of the enzyme and binds the substrate succinate, while the binding sites for coenzyme A and phosphate are found in the alpha subunit. This Cereibacter sphaeroides (strain ATCC 17025 / ATH 2.4.3) (Rhodobacter sphaeroides) protein is Succinate--CoA ligase [ADP-forming] subunit beta.